We begin with the raw amino-acid sequence, 323 residues long: Viral cathepsin (323 aa).

Positions 1–16 are cleaved as a signal peptide; it reads MNKILFYLFVYAVVKS. Positions 17 to 112 are cleaved as a propeptide — activation peptide; that stretch reads AAYDPLKAPN…ILLDQPPGKG (96 aa). 3 disulfides stabilise this stretch: Cys-133–Cys-174, Cys-167–Cys-207, and Cys-262–Cys-310. The active site involves Cys-136. Residue Asn-158 is glycosylated (N-linked (GlcNAc...) asparagine; by host). Active-site residues include His-269 and Asn-289.

This sequence belongs to the peptidase C1 family. Post-translationally, synthesized as an inactive proenzyme and activated by proteolytic removal of the inhibitory propeptide.

The enzyme catalyses Endopeptidase of broad specificity, hydrolyzing substrates of both cathepsin L and cathepsin B.. Functionally, cysteine protease that plays an essential role in host liquefaction to facilitate horizontal transmission of the virus. May participate in the degradation of foreign protein expressed by the baculovirus system. This chain is Viral cathepsin (VCATH), found in Bombyx mori (Silk moth).